The primary structure comprises 291 residues: Putative fatty acid elongase 4 (291 aa).

3 helical membrane-spanning segments follow: residues 46-66 (ILFQ…FILI), 79-99 (FTLK…SIIA), and 254-274 (NLYL…QFFV).

This sequence belongs to the ELO family.

It is found in the membrane. It carries out the reaction a very-long-chain acyl-CoA + malonyl-CoA + H(+) = a very-long-chain 3-oxoacyl-CoA + CO2 + CoA. Its pathway is lipid metabolism; fatty acid biosynthesis. Could be implicated in synthesis of very long chain fatty acids. The chain is Putative fatty acid elongase 4 (elo-4) from Caenorhabditis elegans.